Here is a 749-residue protein sequence, read N- to C-terminus: Taperin (749 aa).

Residues 144–348 (PAAPCRRGSP…IRPSSKPDME (205 aa)) form a disordered region. Composition is skewed to polar residues over residues 169-179 (SAATRTPTNRS), 230-239 (LQKTGSNSFT), and 250-266 (VNRS…SPTG). Serine 274 carries the post-translational modification Phosphoserine. Residues 323–335 (QRQWVSSATSAND) show a composition bias toward polar residues. The span at 337-347 (FEIRPSSKPDM) shows a compositional bias: basic and acidic residues. Residues serine 401, serine 457, and serine 501 each carry the phosphoserine modification. Disordered stretches follow at residues 502-586 (EEEA…TTLE), 636-673 (FEYP…SEKP), and 730-749 (LTPA…ALYF). 2 stretches are compositionally biased toward polar residues: residues 534-544 (ELLNRGSNTFT) and 558-570 (HLSQ…QQGA). Residues 647–668 (EEAEEEEEEEGEEDGEEEEVGP) show a composition bias toward acidic residues.

Belongs to the taperin family. In terms of assembly, interacts with GRXCR2; the interaction restricts TPRN to the stereocilum basal region. Interacts with actin ACTB; the interaction may stabilize stereocilia. Interacts with CLIC5. Interacts with PTPRQ. TPRN, CLIC5 and PTPQR form concentric rings at the base of stereocilia and may form a complex. Interacts with phosphatase PPP1CA; the interaction results in inhibition of PPP1CA phosphatase activity. Interacts with DNA damage response proteins XRCC6/KU70, XRCC5/KU80, PARP1, TOP1 and TOP2A; these interactions recruit TPRN to sites of DNA damage where it may play a role in DNA repair. In the organ of Corti, expressed in the inner ear hair cell stereocilia and the supporting cells (at protein level). Expressed in the sensory epithelia of the organ of Corti and vestibular end organs and, to a lesser extent, in Reisner's membrane and the spiral ligament (at protein level). At postnatal day 2, expression is detected in cochlea, liver, brain, kidney, heart and lung.

Its subcellular location is the cell projection. It localises to the stereocilium. The protein localises to the microvillus. It is found in the nucleus. The protein resides in the nucleoplasm. Its subcellular location is the cytoplasm. Essential for hearing. Required for maintenance of stereocilia on both inner and outer hair cells. Necessary for the integrity of the stereociliary rootlet. May act as an actin cytoskeleton regulator involved in the regulation of actin dynamics at the pointed end in hair cells. Forms rings at the base of stereocilia and binds actin filaments in the stereocilia which may stabilize the stereocilia. Acts as a strong inhibitor of PPP1CA phosphatase activity. Recruited to sites of DNA damage and may play a role in DNA damage repair. The chain is Taperin (Tprn) from Mus musculus (Mouse).